The chain runs to 113 residues: UPF0102 protein Mfla_2283 (113 aa).

This sequence belongs to the UPF0102 family.

The sequence is that of UPF0102 protein Mfla_2283 from Methylobacillus flagellatus (strain ATCC 51484 / DSM 6875 / VKM B-1610 / KT).